The primary structure comprises 275 residues: Probable ribosomal RNA small subunit methyltransferase A (275 aa).

5 residues coordinate S-adenosyl-L-methionine: L13, G38, E59, D84, and N101.

This sequence belongs to the class I-like SAM-binding methyltransferase superfamily. rRNA adenine N(6)-methyltransferase family. RsmA subfamily.

The protein localises to the cytoplasm. Its function is as follows. Specifically dimethylates two adjacent adenosines in the loop of a conserved hairpin near the 3'-end of 16S rRNA in the 30S particle. May play a critical role in biogenesis of 30S subunits. The sequence is that of Probable ribosomal RNA small subunit methyltransferase A from Methanocaldococcus jannaschii (strain ATCC 43067 / DSM 2661 / JAL-1 / JCM 10045 / NBRC 100440) (Methanococcus jannaschii).